Here is a 74-residue protein sequence, read N- to C-terminus: DNA-directed RNA polymerase subunit omega (74 aa).

The protein belongs to the RNA polymerase subunit omega family. As to quaternary structure, the RNAP catalytic core consists of 2 alpha, 1 beta/beta' and 1 omega subunit. When a sigma factor is associated with the core the holoenzyme is formed, which can initiate transcription.

The catalysed reaction is RNA(n) + a ribonucleoside 5'-triphosphate = RNA(n+1) + diphosphate. Functionally, promotes RNA polymerase assembly. Latches the N- and C-terminal regions of the beta' subunit thereby facilitating its interaction with the beta and alpha subunits. This is DNA-directed RNA polymerase subunit omega from Helicobacter hepaticus (strain ATCC 51449 / 3B1).